A 564-amino-acid chain; its full sequence is Proline--tRNA ligase (564 aa).

It belongs to the class-II aminoacyl-tRNA synthetase family. ProS type 1 subfamily. In terms of assembly, homodimer.

Its subcellular location is the cytoplasm. It carries out the reaction tRNA(Pro) + L-proline + ATP = L-prolyl-tRNA(Pro) + AMP + diphosphate. Its function is as follows. Catalyzes the attachment of proline to tRNA(Pro) in a two-step reaction: proline is first activated by ATP to form Pro-AMP and then transferred to the acceptor end of tRNA(Pro). As ProRS can inadvertently accommodate and process non-cognate amino acids such as alanine and cysteine, to avoid such errors it has two additional distinct editing activities against alanine. One activity is designated as 'pretransfer' editing and involves the tRNA(Pro)-independent hydrolysis of activated Ala-AMP. The other activity is designated 'posttransfer' editing and involves deacylation of mischarged Ala-tRNA(Pro). The misacylated Cys-tRNA(Pro) is not edited by ProRS. The chain is Proline--tRNA ligase from Coxiella burnetii (strain RSA 331 / Henzerling II).